Consider the following 441-residue polypeptide: Endothelin receptor type B (441 aa).

The N-terminal stretch at 1 to 26 (MQPPPSLCGLALLALVLACGMAEVWG) is a signal peptide. Residues 27–100 (EEREMPSAPA…RPTEIKDTFK (74 aa)) are Extracellular-facing. A disordered region spans residues 30–90 (EMPSAPATPP…APRRTPPPCQ (61 aa)). Positions 47-65 (LTPSTKTSWPRDSNASLPR) are enriched in polar residues. Asn60 carries N-linked (GlcNAc...) asparagine glycosylation. The helical transmembrane segment at 101-125 (YINTVVSCLVFVLGIIGNSTLLRII) threads the bilayer. The Cytoplasmic portion of the chain corresponds to 126-136 (YKNKCMRNGPN). Residues 137-162 (ILIASLALGDLLHIIIDIPINVYKLL) form a helical membrane-spanning segment. Over 163–174 (AEDWPFGAEMCK) the chain is Extracellular. Cys173 and Cys254 form a disulfide bridge. Residues 175 to 196 (LVPFIQKASVGITVLSLCALSI) form a helical membrane-spanning segment. Residues 197 to 217 (DRYRAVASWSRIKGIGVPKWT) lie on the Cytoplasmic side of the membrane. A helical transmembrane segment spans residues 218-242 (AVEIVLIWVVSVILAVPEAIGFNLV). Over 243–270 (TIDYKGSYLRICLLNPTQKTAFMQFYKT) the chain is Extracellular. The helical transmembrane segment at 271–295 (AKDWWLFSFYFCLPLAITAFFYTLM) threads the bilayer. The Cytoplasmic portion of the chain corresponds to 296–323 (TCEMLRKKSGMQIALNDHLKQRREVAKT). At Ser304 the chain carries Phosphoserine. A helical transmembrane segment spans residues 324-349 (VFCLVLVFGLCWLALHLSRILKLTLY). The Extracellular portion of the chain corresponds to 350-361 (DQNDPNRCELLS). Residues 362–388 (FLLVLDYIGINMASLNSCINPIALYLV) traverse the membrane as a helical segment. Residues 389-441 (SKRFKNCFKSCLCCWCQSFEEKQSLEEKQSCLKFKANDHGYDNFRSSNKYSSS) are Cytoplasmic-facing. 2 S-palmitoyl cysteine lipidation sites follow: Cys402 and Cys404. A Phosphoserine modification is found at Ser418. Position 438 is a phosphotyrosine (Tyr438). A phosphoserine mark is found at Ser439, Ser440, and Ser441.

This sequence belongs to the G-protein coupled receptor 1 family. Endothelin receptor subfamily. EDNRB sub-subfamily.

Its subcellular location is the cell membrane. Its function is as follows. Non-specific receptor for endothelin 1, 2, and 3. Mediates its action by association with G proteins that activate a phosphatidylinositol-calcium second messenger system. In Oryctolagus cuniculus (Rabbit), this protein is Endothelin receptor type B (EDNRB).